Consider the following 441-residue polypeptide: Transforming protein p54/c-ets-1 (441 aa).

The PNT domain maps to 51-136; sequence ATFSGFAKEQ…EHLEILQKEE (86 aa). Residues 130–243 are activation domain; required for transcription activation; it reads EILQKEEAKP…DNMCMGRASR (114 aa). The helix HI-1 stretch occupies residues 304–312; it reads FKDYVRDRA. The tract at residues 323 to 330 is helix HI-2; it reads AAALAGYT. The ETS DNA-binding region spans 335–415; the sequence is IQLWQFLLEL…AGKRYVYRFV (81 aa). Residues 418–422 are helix H4; it reads LQSLL. Residues 426–432 form a helix H5 region; the sequence is PEELHAM.

The protein belongs to the ETS family. In terms of assembly, binds DNA as a homodimer; homodimerization is required for transcription activation.

It localises to the nucleus. It is found in the cytoplasm. Autoinhibited by a module composed of four alpha helices (HI-1, HI-2, H4, and H5) that flank the DNA-binding ETS domain, reducing the affinity for DNA. Transcription factor. Directly controls the expression of cytokine and chemokine genes in a wide variety of different cellular contexts. The protein is Transforming protein p54/c-ets-1 (ETS1) of Gallus gallus (Chicken).